The primary structure comprises 732 residues: Bromodomain-containing factor 1 (732 aa).

A compositionally biased stretch (polar residues) spans 1–22; sequence MSETFPETNTPVQTPSTESFVN. Disordered regions lie at residues 1 to 207, 324 to 380, 491 to 517, 556 to 600, and 700 to 732; these read MSET…NLPE, TNVA…ETKP, NKPV…EDNV, REQQ…TPPQ, and VNGQ…SEEE. The segment covering 37 to 51 has biased composition (low complexity); it reads SQDSDSNQQSSHQEP. The segment covering 89–100 has biased composition (polar residues); the sequence is ASQTGVIQTEVS. Acidic residues predominate over residues 137-147; it reads EAPEENPQEEV. In terms of domain architecture, Bromo 1 spans 206–315; it reads PENPIPQHQA…AQFEKLMVKV (110 aa). Positions 327 to 338 are enriched in polar residues; that stretch reads AEATSVATSPTT. The segment covering 370 to 380 has biased composition (basic and acidic residues); it reads KSKELPYETKP. In terms of domain architecture, Bromo 2 spans 383–492; that stretch reads KKVAAELRFC…AVFDKKWANK (110 aa). Positions 529-569 form a coiled coil; the sequence is AIQVMENQIIRMRKELDELKKEHLKKLREQQAARKKKKQQK. The segment covering 561–579 has biased composition (basic residues); it reads ARKKKKQQKGKRRAPKAKH. A compositionally biased stretch (pro residues) spans 590–600; that stretch reads PPEPPKLTPPQ. An NET domain is found at 593-672; the sequence is PPKLTPPQPV…GDKALKNSAG (80 aa). The segment covering 718–732 has biased composition (acidic residues); the sequence is ESSEDEASSESSEEE.

This sequence belongs to the BET family.

It is found in the nucleus. Functionally, transcription factor involved in the expression of a broad class of genes including snRNAs. Required for sporulation and DNA-damage repair. Prevents the spreading of SIR silencing at telomeres and protects histone H4, but not H3, from deacetylation. The sequence is that of Bromodomain-containing factor 1 (BDF1) from Candida albicans (strain SC5314 / ATCC MYA-2876) (Yeast).